The chain runs to 275 residues: Glucosamine-6-phosphate deaminase 2 (275 aa).

D72 functions as the Proton acceptor; for enolization step in the catalytic mechanism. Positions 102-131 form a coiled coil; sequence NNAHILDGNASDLQAECEDFERKIKEAGGI. D141 functions as the For ring-opening step in the catalytic mechanism. Residue H143 is the Proton acceptor; for ring-opening step of the active site. Residue E148 is the For ring-opening step of the active site.

It belongs to the glucosamine/galactosamine-6-phosphate isomerase family. Homohexamer.

The protein resides in the cytoplasm. It catalyses the reaction alpha-D-glucosamine 6-phosphate + H2O = beta-D-fructose 6-phosphate + NH4(+). Catalyzes the reversible conversion of alpha-D-glucosamine 6-phosphate (GlcN-6P) into beta-D-fructose 6-phosphate (Fru-6P) and ammonium ion, a regulatory reaction step in de novo uridine diphosphate-N-acetyl-alpha-D-glucosamine (UDP-GlcNAc) biosynthesis via hexosamine pathway. In Xenopus laevis (African clawed frog), this protein is Glucosamine-6-phosphate deaminase 2.